The following is a 267-amino-acid chain: Indole-3-glycerol phosphate synthase (267 aa).

The protein belongs to the TrpC family.

It carries out the reaction 1-(2-carboxyphenylamino)-1-deoxy-D-ribulose 5-phosphate + H(+) = (1S,2R)-1-C-(indol-3-yl)glycerol 3-phosphate + CO2 + H2O. It participates in amino-acid biosynthesis; L-tryptophan biosynthesis; L-tryptophan from chorismate: step 4/5. This Delftia acidovorans (strain DSM 14801 / SPH-1) protein is Indole-3-glycerol phosphate synthase.